A 95-amino-acid chain; its full sequence is uncharacterized protein (95 aa).

Residues 1–17 form the signal peptide; it reads MTSSLVIYIFLWSRLIC.

This is an uncharacterized protein from Saccharomyces cerevisiae (strain ATCC 204508 / S288c) (Baker's yeast).